A 106-amino-acid chain; its full sequence is MGNNSTWSQSENLTADKQKEKLQPPSMYNVVLNNDDYTPMEFVIDVLQKFFSYDIERATQLMLTVHYQGKAICGVFSAEVAETKVVQVNRYARENEHPLLCTLEKA.

Polar residues predominate over residues 1–13 (MGNNSTWSQSENL). Residues 1–21 (MGNNSTWSQSENLTADKQKEK) are disordered.

It belongs to the ClpS family. In terms of assembly, binds to the N-terminal domain of the chaperone ClpA.

Involved in the modulation of the specificity of the ClpAP-mediated ATP-dependent protein degradation. In Pectobacterium carotovorum subsp. carotovorum (strain PC1), this protein is ATP-dependent Clp protease adapter protein ClpS.